We begin with the raw amino-acid sequence, 109 residues long: Large ribosomal subunit protein uL24 (109 aa).

This sequence belongs to the universal ribosomal protein uL24 family. Part of the 50S ribosomal subunit.

In terms of biological role, one of two assembly initiator proteins, it binds directly to the 5'-end of the 23S rRNA, where it nucleates assembly of the 50S subunit. Its function is as follows. One of the proteins that surrounds the polypeptide exit tunnel on the outside of the subunit. This Legionella pneumophila (strain Paris) protein is Large ribosomal subunit protein uL24.